We begin with the raw amino-acid sequence, 332 residues long: Olfactory receptor 10G6 (332 aa).

Residues 1–46 (MLEGVEHLLLLLLLTDVNSKELQSGNQTSVSHFILVGLHHPPQLGA) lie on the Extracellular side of the membrane. Asparagine 26 carries N-linked (GlcNAc...) asparagine glycosylation. The chain crosses the membrane as a helical span at residues 47–67 (PLFLAFLVIYLLTVSGNGLII). The Cytoplasmic segment spans residues 68–75 (LTVLVDIR). A helical transmembrane segment spans residues 76–96 (LHRPMCLFLCHLSFLDMTISC). Topologically, residues 97-120 (AIVPKMLAGFLLGSRIISFGGCVI) are extracellular. An intrachain disulfide couples cysteine 118 to cysteine 210. Residues 121–141 (QLFSFHFLGCTECFLYTLMAY) form a helical membrane-spanning segment. Residues 142–160 (DRFLAICKPLHYATIMTHR) lie on the Cytoplasmic side of the membrane. The chain crosses the membrane as a helical span at residues 161–181 (VCNSLALGTWLGGTIHSLFQT). Residues 182–218 (SFVFRLPFCGPNRVDYIFCDIPAMLRLACADTAINEL) are Extracellular-facing. A helical transmembrane segment spans residues 219–238 (VTFADIGFLALTCFMLILTS). The Cytoplasmic portion of the chain corresponds to 239 to 258 (YGYIVAAILRIPSADGRRNA). A helical transmembrane segment spans residues 259-279 (FSTCAAHLTVVIVYYVPCTFI). Topologically, residues 280-290 (YLRPCSQEPLD) are extracellular. Residues 291-311 (GVVAVFYTVITPLLNSIIYTL) form a helical membrane-spanning segment. The Cytoplasmic portion of the chain corresponds to 312–332 (CNKEMKAALQRLGGHKEVQPH).

The protein belongs to the G-protein coupled receptor 1 family.

It localises to the cell membrane. Its function is as follows. Odorant receptor. This chain is Olfactory receptor 10G6 (OR10G6), found in Homo sapiens (Human).